Here is an 889-residue protein sequence, read N- to C-terminus: Alanine--tRNA ligase (889 aa).

Positions 566, 570, 683, and 687 each coordinate Zn(2+).

The protein belongs to the class-II aminoacyl-tRNA synthetase family. The cofactor is Zn(2+).

Its subcellular location is the cytoplasm. It carries out the reaction tRNA(Ala) + L-alanine + ATP = L-alanyl-tRNA(Ala) + AMP + diphosphate. Functionally, catalyzes the attachment of alanine to tRNA(Ala) in a two-step reaction: alanine is first activated by ATP to form Ala-AMP and then transferred to the acceptor end of tRNA(Ala). Also edits incorrectly charged Ser-tRNA(Ala) and Gly-tRNA(Ala) via its editing domain. The polypeptide is Alanine--tRNA ligase (Herpetosiphon aurantiacus (strain ATCC 23779 / DSM 785 / 114-95)).